The primary structure comprises 569 residues: Probable protein phosphatase 2C BIPP2C1 (569 aa).

Disordered stretches follow at residues 120–214 (EVSP…KVTG) and 251–279 (SLDD…GSSI). Positions 179 to 188 (ESERGSDADG) are enriched in basic and acidic residues. In terms of domain architecture, PPM-type phosphatase spans 329–564 (AAMLPHPSKV…DDVTVVVSVV (236 aa)). Mn(2+) is bound by residues D358, G359, D488, and D555.

Belongs to the PP2C family. It depends on Mg(2+) as a cofactor. Mn(2+) is required as a cofactor.

It catalyses the reaction O-phospho-L-seryl-[protein] + H2O = L-seryl-[protein] + phosphate. The catalysed reaction is O-phospho-L-threonyl-[protein] + H2O = L-threonyl-[protein] + phosphate. May play a role in responses to biotic and abiotic stresses. The chain is Probable protein phosphatase 2C BIPP2C1 (BIPP2C1) from Oryza sativa subsp. japonica (Rice).